Here is a 349-residue protein sequence, read N- to C-terminus: Hydroxymethylglutaryl-CoA synthase (349 aa).

(3S)-3-hydroxy-3-methylglutaryl-CoA-binding residues include aspartate 29 and alanine 30. Glutamate 81 (proton donor/acceptor) is an active-site residue. Residues cysteine 113, threonine 154, threonine 202, and histidine 235 each contribute to the (3S)-3-hydroxy-3-methylglutaryl-CoA site. Catalysis depends on cysteine 113, which acts as the Acyl-thioester intermediate. Catalysis depends on histidine 235, which acts as the Proton donor/acceptor. Arginine 240 is a CoA binding site. The (3S)-3-hydroxy-3-methylglutaryl-CoA site is built by arginine 244, asparagine 267, and serine 297.

It belongs to the thiolase-like superfamily. Archaeal HMG-CoA synthase family. Interacts with acetoacetyl-CoA thiolase that catalyzes the precedent step in the pathway and with a DUF35 protein. The acetoacetyl-CoA thiolase/HMG-CoA synthase complex channels the intermediate via a fused CoA-binding site, which allows for efficient coupling of the endergonic thiolase reaction with the exergonic HMGCS reaction.

The enzyme catalyses acetoacetyl-CoA + acetyl-CoA + H2O = (3S)-3-hydroxy-3-methylglutaryl-CoA + CoA + H(+). It functions in the pathway metabolic intermediate biosynthesis; (R)-mevalonate biosynthesis; (R)-mevalonate from acetyl-CoA: step 2/3. Catalyzes the condensation of acetyl-CoA with acetoacetyl-CoA to form 3-hydroxy-3-methylglutaryl-CoA (HMG-CoA). Functions in the mevalonate (MVA) pathway leading to isopentenyl diphosphate (IPP), a key precursor for the biosynthesis of isoprenoid compounds that are building blocks of archaeal membrane lipids. The protein is Hydroxymethylglutaryl-CoA synthase of Caldivirga maquilingensis (strain ATCC 700844 / DSM 13496 / JCM 10307 / IC-167).